Consider the following 562-residue polypeptide: O-fucosyltransferase 4 (562 aa).

The tract at residues 10-46 (SIQNRLPGSDHTTPSPPTSPHLCRSRSKSSSVSGQQQ) is disordered. Residues 37–46 (KSSSVSGQQQ) show a composition bias toward low complexity. A helical; Signal-anchor for type II membrane protein membrane pass occupies residues 67-87 (GILLFAPIIYISCMLFHLHAA). N-linked (GlcNAc...) asparagine glycans are attached at residues Asn-122, Asn-146, Asn-185, and Asn-239. 332–334 (HLR) serves as a coordination point for substrate. N-linked (GlcNAc...) asparagine glycosylation is found at Asn-404, Asn-420, Asn-450, and Asn-555.

This sequence belongs to the glycosyltransferase GT106 family.

The protein resides in the membrane. It functions in the pathway glycan metabolism. The polypeptide is O-fucosyltransferase 4 (Arabidopsis thaliana (Mouse-ear cress)).